The chain runs to 126 residues: Small ribosomal subunit protein uS12 (126 aa).

Residues 1–26 are disordered; the sequence is MPTINQLVRKGRASETTKSKSPALQD. D89 is subject to 3-methylthioaspartic acid. The segment at 101–126 is disordered; sequence SLDTQGVKDRKQARSKYGAKRAKAAK. A compositionally biased stretch (basic residues) spans 113–126; that stretch reads ARSKYGAKRAKAAK.

Belongs to the universal ribosomal protein uS12 family. In terms of assembly, part of the 30S ribosomal subunit. Contacts proteins S8 and S17. May interact with IF1 in the 30S initiation complex.

Functionally, with S4 and S5 plays an important role in translational accuracy. Its function is as follows. Interacts with and stabilizes bases of the 16S rRNA that are involved in tRNA selection in the A site and with the mRNA backbone. Located at the interface of the 30S and 50S subunits, it traverses the body of the 30S subunit contacting proteins on the other side and probably holding the rRNA structure together. The combined cluster of proteins S8, S12 and S17 appears to hold together the shoulder and platform of the 30S subunit. In Burkholderia pseudomallei (strain 1106a), this protein is Small ribosomal subunit protein uS12.